The primary structure comprises 149 residues: MDLILLQKVTNLGNLGDKVSVKPGYGRNFLVPQGKAVPATAANVEAFETKRAEYEAKANSILAEAQSRATKFEGASVTIGAHASTEGKLYGSVGPRDIAEAFTAAGLPLEKSEVILGEGAFRNVGEYDVVLHLHADVETTVKVIVESDA.

This sequence belongs to the bacterial ribosomal protein bL9 family.

Its function is as follows. Binds to the 23S rRNA. The polypeptide is Large ribosomal subunit protein bL9 (Xanthomonas axonopodis pv. citri (strain 306)).